Consider the following 676-residue polypeptide: Head-specific guanylate cyclase (676 aa).

One can recognise a Guanylate cyclase domain in the interval 466–593 (TILFSDIVGF…HSVTIANKFE (128 aa)).

It belongs to the adenylyl cyclase class-4/guanylyl cyclase family. As to quaternary structure, heterodimer. In terms of tissue distribution, head, where it is preferentially expressed in the CNS and the retina. Not found in bodies.

The protein localises to the cytoplasm. The enzyme catalyses GTP = 3',5'-cyclic GMP + diphosphate. Its function is as follows. May have a role in phototransduction. Catalyzes the conversion of GTP to cGMP, a common second messenger that is utilized in a wide variety of cells and signal transduction pathways. A second subunit is required for enzyme activity. This chain is Head-specific guanylate cyclase (Gycalpha99B), found in Drosophila melanogaster (Fruit fly).